Here is a 312-residue protein sequence, read N- to C-terminus: Protein lon-1 (312 aa).

The signal sequence occupies residues 1 to 18; sequence MNYLLTALIALLAPISVA. Residues 87 to 209 enclose the SCP domain; sequence EHNRYRRMVP…GHRNVFVCHY (123 aa). The N-linked (GlcNAc...) asparagine glycan is linked to asparagine 142. The span at 265–284 shows a compositional bias: low complexity; the sequence is TTTTESTTTSTTTEEPTTTC. Residues 265–312 are disordered; that stretch reads TTTTESTTTSTTTEEPTTTCEPDEPEAEGADNNQEEEEENNDGFRMRV. Over residues 285–305 the composition is skewed to acidic residues; the sequence is EPDEPEAEGADNNQEEEEENN.

The protein belongs to the CRISP family. As to expression, expressed in hypodermal tissues.

Regulates body size morphogenesis, but does not affect male tail development. The polypeptide is Protein lon-1 (lon-1) (Caenorhabditis elegans).